A 388-amino-acid chain; its full sequence is Ras-related protein Rab-26 (388 aa).

Positions 1 to 115 (MASTAVGLGG…HHHSQLSLTG (115 aa)) are disordered. The segment covering 7–21 (GLGGGEGDPGAGGPP) has biased composition (gly residues). The span at 47–56 (RIEELRRRPF) shows a compositional bias: basic and acidic residues. Low complexity predominate over residues 67–86 (PASVSASITTTTTQQQQQHH). Basic residues predominate over residues 87-109 (NPSHHHQSSHHQPSHHHHHHHHS). 197 to 204 (GDSGVGKT) provides a ligand contact to GTP. The Effector region motif lies at 219-228 (SFSATVGIAL). Residues 246–250 (DTAGQ) and 304–307 (NKAD) each bind GTP. Residue Cys-382 is the site of S-palmitoyl cysteine attachment. Cys-385 bears the Cysteine methyl ester mark. A lipid anchor (S-geranylgeranyl cysteine) is attached at Cys-385. Positions 386–388 (RNM) are cleaved as a propeptide — removed in mature form.

The protein belongs to the small GTPase superfamily. Rab family.

The protein localises to the cell membrane. Functionally, participates in exocrine secretion. The chain is Ras-related protein Rab-26 from Drosophila melanogaster (Fruit fly).